Here is a 420-residue protein sequence, read N- to C-terminus: Caspase-12 (420 aa).

A CARD domain is found at 1–92 (MAAKRTHERD…QLSLQFPSDD (92 aa)). 2 positions are modified to phosphoserine: Ser85 and Ser90. Positions 93–115 (EEDELQKMFTPSSASESRGKVED) are disordered. Residues His251 and Cys299 contribute to the active site.

The protein belongs to the peptidase C14A family. Heterotetramer that consists of two anti-parallel arranged heterodimers, each one formed by two subunits (Potential). May interact with TRAF2.

In terms of biological role, involved in the activation cascade of caspases responsible for apoptosis execution. In Rattus norvegicus (Rat), this protein is Caspase-12 (Casp12).